A 257-amino-acid chain; its full sequence is Putative hydro-lyase Bcenmc03_3969 (257 aa).

This sequence belongs to the D-glutamate cyclase family.

This Burkholderia orbicola (strain MC0-3) protein is Putative hydro-lyase Bcenmc03_3969.